A 569-amino-acid polypeptide reads, in one-letter code: 4-coumarate-CoA ligase 2 (569 aa).

The interval 1-24 (MITIAESHPQIHHSPPDTTAPSTP) is disordered. Residues 216 to 220 (SSGTT), His265, 337 to 339 (AAP), 359 to 360 (QG), Thr364, Asp448, Arg463, and Lys554 contribute to the ATP site. Residues 290–359 (EMEGMLETIQ…GRLPQAVLGQ (70 aa)) are SBD1. The SBD2 stretch occupies residues 360–427 (GYGMTEAGPV…VRGPQIMKGY (68 aa)).

Belongs to the ATP-dependent AMP-binding enzyme family. Mostly expressed in stems, and, to a lower extent, in bulbs.

The enzyme catalyses (E)-4-coumarate + ATP + CoA = (E)-4-coumaroyl-CoA + AMP + diphosphate. The protein operates within phytoalexin biosynthesis; 3,4',5-trihydroxystilbene biosynthesis; 3,4',5-trihydroxystilbene from trans-4-coumarate: step 1/2. Functionally, produces CoA thioesters of a variety of hydroxy- and methoxy-substituted cinnamic acids, which are used to synthesize several phenylpropanoid-derived compounds, including anthocyanins, flavonoids, isoflavonoids, coumarins, lignin, suberin and wall-bound phenolics. In Narcissus pseudonarcissus (Daffodil), this protein is 4-coumarate-CoA ligase 2.